A 201-amino-acid chain; its full sequence is Dephospho-CoA kinase (201 aa).

The 198-residue stretch at 4 to 201 (SVGLTGNIAS…KYLREAKIKQ (198 aa)) folds into the DPCK domain. ATP is bound at residue 12 to 17 (ASGKST).

It belongs to the CoaE family.

The protein resides in the cytoplasm. The enzyme catalyses 3'-dephospho-CoA + ATP = ADP + CoA + H(+). It participates in cofactor biosynthesis; coenzyme A biosynthesis; CoA from (R)-pantothenate: step 5/5. Catalyzes the phosphorylation of the 3'-hydroxyl group of dephosphocoenzyme A to form coenzyme A. This Legionella pneumophila (strain Lens) protein is Dephospho-CoA kinase.